The following is a 160-amino-acid chain: Non-secretory ribonuclease (160 aa).

Positions 1-27 (MVPKLFTSPICLLLLLGLMGVEGSLHA) are cleaved as a signal peptide. Tryptophan 34 carries a C-linked (Man) tryptophan glycan. Histidine 42 serves as the catalytic Proton acceptor. Asparagine 44 is a glycosylation site (N-linked (GlcNAc...) asparagine). Cystine bridges form between cysteine 50–cysteine 110, cysteine 64–cysteine 122, cysteine 82–cysteine 137, and cysteine 89–cysteine 98. A 3'-nitrotyrosine modification is found at tyrosine 60. 65–69 (KNQNT) contributes to the substrate binding site. N-linked (GlcNAc...) asparagine glycans are attached at residues asparagine 92, asparagine 111, and asparagine 138. Catalysis depends on histidine 155, which acts as the Proton donor.

It belongs to the pancreatic ribonuclease family. In terms of assembly, interacts with and forms a tight 1:1 complex with RNH1. Dimerization of two such complexes may occur.

The protein localises to the lysosome. It localises to the cytoplasmic granule. The enzyme catalyses an [RNA] containing cytidine + H2O = an [RNA]-3'-cytidine-3'-phosphate + a 5'-hydroxy-ribonucleotide-3'-[RNA].. The catalysed reaction is an [RNA] containing uridine + H2O = an [RNA]-3'-uridine-3'-phosphate + a 5'-hydroxy-ribonucleotide-3'-[RNA].. Functionally, this is a non-secretory ribonuclease. It is a pyrimidine specific nuclease with a slight preference for U. Cytotoxin and helminthotoxin. Possesses a wide variety of biological activities. This Macaca nemestrina (Pig-tailed macaque) protein is Non-secretory ribonuclease (RNASE2).